We begin with the raw amino-acid sequence, 218 residues long: uncharacterized protein (218 aa).

The RING-type zinc-finger motif lies at 154-199; that stretch reads CFICTMEYSRTDKNLHPIILNCGHNLCRSCINKLTGNGIVKCPFDR.

This is an uncharacterized protein from Caenorhabditis elegans.